A 136-amino-acid polypeptide reads, in one-letter code: T-cell receptor beta chain V region LB2 (136 aa).

Positions 1-21 (MNKWVFCWVTLCLLTVETTHG) are cleaved as a signal peptide. The v segment stretch occupies residues 22 to 116 (DGGIITQTPK…EMTVFLCASS (95 aa)). The cysteines at positions 45 and 113 are disulfide-linked. A d segment region spans residues 117–120 (IRLA). A j segment region spans residues 121–136 (SAETLYFGSGTRLTVL).

The polypeptide is T-cell receptor beta chain V region LB2 (Mus musculus (Mouse)).